The primary structure comprises 453 residues: MSENNEEQHQQQQQQQPVAVETPSAVEAPASADPSSEQSVAVEGNSEQAEDNQGENDPSVVPANAITGGRETSDRVLYVGNLDKAITEDILKQYFQVGGPIANIKIMIDKNNKNVNYAFVEYHQSHDANIALQTLNGKQIENNIVKINWAFQSQQSSSDDTFNLFVGDLNVNVDDETLRNAFKDFPSYLSGHVMWDMQTGSSRGYGFVSFTSQDDAQNAMDSMQGQDLNGRPLRINWAAKRDNNNNNNYQQRRNYGNNNRGGFRQYNSNNNNNMNMGMNMNMNMNMNNSRGMPPSSMGMPIGAMPLPSQGQPQQSQTIGLPPQVNPQAVDHIIRSAPPRVTTAYIGNIPHFATEADLIPLFQNFGFILDFKHYPEKGCCFIKYDTHEQAAVCIVALANFPFQGRNLRTGWGKERSNFMPQQQQQGGQPLIMNDQQQPVMSEQQQQQQQQQQQQ.

Positions 1–67 are disordered; the sequence is MSENNEEQHQ…PSVVPANAIT (67 aa). At Ser2 the chain carries N-acetylserine. RRM domains are found at residues 75–152 and 162–240; these read RVLY…WAFQ and FNLF…WAAK. Residues 241–262 form a disordered region; that stretch reads RDNNNNNNYQQRRNYGNNNRGG. The span at 244 to 262 shows a compositional bias: low complexity; that stretch reads NNNNNYQQRRNYGNNNRGG. Arg260 bears the Omega-N-methylarginine mark. An RNA-binding RGG-box region spans residues 260-264; the sequence is RGGFR. Residues 341 to 413 enclose the RRM 3 domain; sequence TTAYIGNIPH…RNLRTGWGKE (73 aa). Residues 419–453 are disordered; sequence PQQQQQGGQPLIMNDQQQPVMSEQQQQQQQQQQQQ. Over residues 434–453 the composition is skewed to low complexity; that stretch reads QQQPVMSEQQQQQQQQQQQQ.

As to quaternary structure, interacts with NAB2.

It localises to the cytoplasm. Its subcellular location is the nucleus. The protein localises to the P-body. The protein resides in the stress granule. Functionally, may be associated with hnRNA within the nucleus and remains associated during nucleocytoplasmic mRNA transport, once the proteins are in the cytoplasm, disassembly of PUB1-RNA complexes may occur prior to PAB1 binding and formation of a translationally competent RNP complex. Binds to polyadenylated RNA; prefers to bind poly(rU); binds to T-rich single-stranded DNA. The sequence is that of Nuclear and cytoplasmic polyadenylated RNA-binding protein PUB1 from Saccharomyces cerevisiae (strain ATCC 204508 / S288c) (Baker's yeast).